The following is a 123-amino-acid chain: Small ribosomal subunit protein uS12 (123 aa).

At D89 the chain carries 3-methylthioaspartic acid. The interval 100–123 (GSLDTSGVKGRNQGRSKYGTKRPK) is disordered. A compositionally biased stretch (basic residues) spans 111 to 123 (NQGRSKYGTKRPK).

This sequence belongs to the universal ribosomal protein uS12 family. Part of the 30S ribosomal subunit. Contacts proteins S8 and S17. May interact with IF1 in the 30S initiation complex.

With S4 and S5 plays an important role in translational accuracy. In terms of biological role, interacts with and stabilizes bases of the 16S rRNA that are involved in tRNA selection in the A site and with the mRNA backbone. Located at the interface of the 30S and 50S subunits, it traverses the body of the 30S subunit contacting proteins on the other side and probably holding the rRNA structure together. The combined cluster of proteins S8, S12 and S17 appears to hold together the shoulder and platform of the 30S subunit. In Pseudomonas fluorescens (strain ATCC BAA-477 / NRRL B-23932 / Pf-5), this protein is Small ribosomal subunit protein uS12.